We begin with the raw amino-acid sequence, 964 residues long: MPEQAQQGEQSVKRRRVTRACDECRKKKVKCDGQQPCIHCTVYSYECTYKKPTKRTQNSGNSGVLTLGNVTTGPSSSTVVAAAASNPNKLLSNIKTERAILPGASTIPASNNPSKPRKYKTKSTRLQSKIDRYKQIFDEVFPQLPDIDNLDIPVFLQIFHNFKRDSQSFLDDTVKEYTLIVNDSSSPIQPVLSSNSKNSTPDEFLPNMKSDSNSASSNREQDSVDTYSNIPVGREIKIILPPKAIALQFVKSTWEHCCVLLRFYHRPSFIRQLDELYETDPNNYTSKQMQFLPLCYAAIAVGALFSKSIVSNDSSREKFLQDEGYKYFIAARKLIDITNARDLNSIQAILMLIIFLQCSARLSTCYTYIGVAMRSALRAGFHRKLSPNSGFSPIEIEMRKRLFYTIYKLDVYINAMLGLPRSISPDDFDQTLPLDLSDENITEVAYLPENQHSVLSSTGISNEHTKLFLILNEIISELYPIKKTSNIISHETVTSLELKLRNWLDSLPKELIPNAENIDPEYERANRLLHLSFLHVQIILYRPFIHYLSRNMNAENVDPLCYRRARNSIAVARTVIKLAKEMVSNNLLTGSYWYACYTIFYSVAGLLFYIHEAQLPDKDSAREYYDILKDAETGRSVLIQLKDSSMAASRTYNLLNQIFEKLNSKTIQLTALHSSPSNESAFLVTNNSSALKPHLGDSLQPPVFFSSQDTKNSFSLAKSEESTNDYAMANYLNNTPISENPLNEAQQQDQVSQGTTNMSNERDPNNFLSIDIRLDNNGQSNILDATDDVFIRNDGDIPTNSAFDFSSSKSNASNNSNPDTINNNYNNVSGKNNNNNNITNNSNNNHNNNNNDNNNNNNNNNNNNNNNNNSGNSSNNNNNNNNNKNNNDFGIKIDNNSPSYEGFPQLQIPLSQDNLNIEDKEEMSPNIEIKNEQNMTDSNDILGVFDQLDAQLFGKYLPLNYPSE.

A DNA-binding region (zn(2)-C6 fungal-type) is located at residues 21-47 (CDECRKKKVKCDGQQPCIHCTVYSYEC). The interval 104–125 (ASTIPASNNPSKPRKYKTKSTR) is disordered. Position 166 is a phosphoserine; by ATM or ATR (serine 166). Phosphoserine is present on serine 186. Composition is skewed to polar residues over residues 190-201 (PVLSSNSKNSTP), 209-225 (KSDS…DSVD), and 733-759 (NNTP…TNMS). 3 disordered regions span residues 190–225 (PVLS…DSVD), 733–764 (NNTP…ERDP), and 800–900 (NSAF…SPSY). Residues 800 to 896 (NSAFDFSSSK…NDFGIKIDNN (97 aa)) are compositionally biased toward low complexity. Residue serine 963 is modified to Phosphoserine.

It belongs to the ASG1 family.

It is found in the nucleus. Functionally, probable transcription factor involved in the stress response. This is Activator of stress genes 1 (ASG1) from Saccharomyces cerevisiae (strain ATCC 204508 / S288c) (Baker's yeast).